We begin with the raw amino-acid sequence, 89 residues long: Extender of the chronological lifespan protein ecl3 (89 aa).

It belongs to the ecl1 family.

The protein localises to the nucleus. In terms of biological role, involved in chronological cell aging. This is Extender of the chronological lifespan protein ecl3 (ecl3) from Schizosaccharomyces pombe (strain 972 / ATCC 24843) (Fission yeast).